The sequence spans 98 residues: Biogenesis of lysosome-related organelles complex 1 subunit SNN1 (98 aa).

A coiled-coil region spans residues 55–98; it reads MDEQELLQEEGSLKEELARVNQLKKRLDKLTELYAELARKCGAL.

Belongs to the SNAPIN family. As to quaternary structure, component of the biogenesis of lysosome-related organelles complex-1 (BLOC-1).

It is found in the endosome. In terms of biological role, component of the biogenesis of lysosome-related organelles complex-1 (BLOC-1), a complex involved in endosomal cargo sorting. The chain is Biogenesis of lysosome-related organelles complex 1 subunit SNN1 (SNN1) from Eremothecium gossypii (strain ATCC 10895 / CBS 109.51 / FGSC 9923 / NRRL Y-1056) (Yeast).